The sequence spans 329 residues: Diaminopimelate epimerase (329 aa).

Residues Asn-14 and Asn-73 each coordinate substrate. Residue Cys-82 is the Proton donor of the active site. Substrate is bound by residues 83-84, Asn-170, Asn-206, and 224-225; these read GN and ER. Cys-233 serves as the catalytic Proton acceptor. Residue 234-235 coordinates substrate; it reads GT.

It belongs to the diaminopimelate epimerase family. Homodimer.

It is found in the cytoplasm. It carries out the reaction (2S,6S)-2,6-diaminopimelate = meso-2,6-diaminopimelate. The protein operates within amino-acid biosynthesis; L-lysine biosynthesis via DAP pathway; DL-2,6-diaminopimelate from LL-2,6-diaminopimelate: step 1/1. Functionally, catalyzes the stereoinversion of LL-2,6-diaminopimelate (L,L-DAP) to meso-diaminopimelate (meso-DAP), a precursor of L-lysine and an essential component of the bacterial peptidoglycan. This Listeria innocua serovar 6a (strain ATCC BAA-680 / CLIP 11262) protein is Diaminopimelate epimerase.